The primary structure comprises 580 residues: M-phase inducer phosphatase 2 (580 aa).

Positions 1–24 (MEVPQPEPAPGSALSPAGVCGGAQ) are disordered. Serine 42 is subject to Phosphoserine. Residues 89 to 107 (SLSRRASESSLSSESSESS) are compositionally biased toward low complexity. Disordered regions lie at residues 89–117 (SLSR…DSPS) and 165–196 (NITN…ENDG). Position 169 is a phosphoserine; by MELK (serine 169). A Phosphoserine modification is found at serine 249. Phosphoserine; by MELK and MAPK14 is present on serine 323. The disordered stretch occupies residues 331-370 (PILKRLERPQDRDTPVQNKRRRSVTPPEEQQEAEEPKARV). Residues 334–344 (KRLERPQDRDT) are compositionally biased toward basic and acidic residues. Residue serine 353 is modified to Phosphoserine; by AURKA. Serine 375 bears the Phosphoserine; by BRSK1 and MAPK14 mark. Positions 431-538 (IVDKFVIVDC…FFPQHPNFCE (108 aa)) constitute a Rhodanese domain. Serine 470 is modified (phosphoserine). Cysteine 487 is a catalytic residue. Position 563 is a phosphoserine (serine 563).

It belongs to the MPI phosphatase family. In terms of assembly, interacts with MAPK14 and 14-3-3 proteins. In terms of processing, phosphorylated by BRSK1 in vitro. Phosphorylated by CHEK1, which inhibits the activity of this protein. Phosphorylation at Ser-353 by AURKA might locally participate in the control of the onset of mitosis. Phosphorylation by MELK at Ser-169 promotes localization to the centrosome and the spindle poles during mitosis. Phosphorylation at Ser-323 and Ser-375 by MAPK14 is required for binding to 14-3-3 proteins.

It localises to the cytoplasm. The protein localises to the cytoskeleton. Its subcellular location is the microtubule organizing center. It is found in the centrosome. The protein resides in the spindle pole. The catalysed reaction is O-phospho-L-tyrosyl-[protein] + H2O = L-tyrosyl-[protein] + phosphate. Its activity is regulated as follows. Stimulated by B-type cyclins. In terms of biological role, tyrosine protein phosphatase which functions as a dosage-dependent inducer of mitotic progression. Directly dephosphorylates CDK1 and stimulates its kinase activity. Required for G2/M phases of the cell cycle progression and abscission during cytokinesis in a ECT2-dependent manner. The three isoforms seem to have a different level of activity. This chain is M-phase inducer phosphatase 2 (CDC25B), found in Homo sapiens (Human).